A 367-amino-acid chain; its full sequence is MEAKESRPQGFPELKNDTFLRAAWGEETDYTPVWCMRQAGRYLPEFRETRAAQDFFSTCRSPEACCELTLQPLRRFPLDAAIIFSDILVVPQALGMEVTMVPGKGPSFPEPLREERDLERLRDPATVASELGYVFQAITLTRQQLAGRVPLIGFAGAPWTLMTYMVEGGGSSTMSQAKRWLYQRPQASHQLLRILTDALVPYLVGQVAAGAQALQLFESHAGHLGPQLFSKFALPYIRDVSKRVKAGLQEAGLAPVPMIIFAKDGHFALEELAQAGYEVVGLDWTVAPEKARERVGKTVTLQGNLDPCALYASEEEIGKLVQQMLNDFGPQRYIANLGHGLYPDMDPEHVGAFVDAVHKHSRLLRQN.

At methionine 1 the chain carries N-acetylmethionine. Residues arginine 37, alanine 39, arginine 41, arginine 50, aspartate 86, tyrosine 164, serine 219, and histidine 339 each contribute to the coproporphyrinogen I site. Residues arginine 37, alanine 39, and arginine 41 each contribute to the coproporphyrinogen III site. The coproporphyrinogen III site is built by aspartate 86, tyrosine 164, serine 219, and histidine 339.

This sequence belongs to the uroporphyrinogen decarboxylase family. In terms of assembly, homodimer.

It localises to the cytoplasm. The protein resides in the cytosol. The catalysed reaction is uroporphyrinogen III + 4 H(+) = coproporphyrinogen III + 4 CO2. It carries out the reaction uroporphyrinogen I + 4 H(+) = coproporphyrinogen I + 4 CO2. It participates in porphyrin-containing compound metabolism; protoporphyrin-IX biosynthesis; coproporphyrinogen-III from 5-aminolevulinate: step 4/4. Functionally, catalyzes the sequential decarboxylation of the four acetate side chains of uroporphyrinogen to form coproporphyrinogen and participates in the fifth step in the heme biosynthetic pathway. Isomer I or isomer III of uroporphyrinogen may serve as substrate, but only coproporphyrinogen III can ultimately be converted to heme. In vitro also decarboxylates pentacarboxylate porphyrinogen I. In Ovis aries (Sheep), this protein is Uroporphyrinogen decarboxylase.